The following is a 375-amino-acid chain: Flagellin (375 aa).

Belongs to the bacterial flagellin family.

Its subcellular location is the secreted. It is found in the bacterial flagellum. Its function is as follows. Flagellin is the subunit protein which polymerizes to form the filaments of bacterial flagella. Flagella are an important component in the invasiveness of B.bacilliformis. This is Flagellin from Bartonella bacilliformis.